The primary structure comprises 340 residues: Phenylalanine--tRNA ligase alpha subunit (340 aa).

Glutamate 255 lines the Mg(2+) pocket.

It belongs to the class-II aminoacyl-tRNA synthetase family. Phe-tRNA synthetase alpha subunit type 1 subfamily. Tetramer of two alpha and two beta subunits. Mg(2+) is required as a cofactor.

Its subcellular location is the cytoplasm. The catalysed reaction is tRNA(Phe) + L-phenylalanine + ATP = L-phenylalanyl-tRNA(Phe) + AMP + diphosphate + H(+). The polypeptide is Phenylalanine--tRNA ligase alpha subunit (Exiguobacterium sp. (strain ATCC BAA-1283 / AT1b)).